Here is a 253-residue protein sequence, read N- to C-terminus: DnaJ homolog subfamily C member 8 (253 aa).

At Ala2 the chain carries N-acetylalanine. The residue at position 35 (Ser35) is a Phosphoserine. Residues Asn57–Gln124 enclose the J domain. Residue Lys146 is modified to N6-acetyllysine. A compositionally biased stretch (basic and acidic residues) spans Glu181–Ser222. The interval Glu181 to Glu253 is disordered. 2 short sequence motifs (nuclear localization signal) span residues Lys189–Arg192 and Lys203–Arg206. Ser222 bears the Phosphoserine mark. The segment covering Lys231–Thr240 has biased composition (basic residues). The essential for polyglutamine aggregation suppression stretch occupies residues Gly232 to Glu253.

As to quaternary structure, interacts with SRPK1. Interacts with HSP70 (HSPA1A or HSPA1B). As to expression, ubiquitous.

It is found in the nucleus. In terms of biological role, suppresses polyglutamine (polyQ) aggregation of ATXN3 in neuronal cells. This Homo sapiens (Human) protein is DnaJ homolog subfamily C member 8 (DNAJC8).